The following is a 298-amino-acid chain: Ketohexokinase (298 aa).

4 residues coordinate beta-D-fructose: aspartate 15, glycine 41, asparagine 42, and asparagine 45. Residues arginine 108, 226–229 (AEEG), and 255–258 (GAGD) contribute to the ATP site. Residue aspartate 258 participates in beta-D-fructose binding.

This sequence belongs to the carbohydrate kinase PfkB family. In terms of assembly, homodimer. Most abundant in liver, kidney, gut, spleen and pancreas. Low levels also found in adrenal, muscle, brain and eye.

The enzyme catalyses beta-D-fructose + ATP = beta-D-fructose 1-phosphate + ADP + H(+). Its pathway is carbohydrate metabolism; fructose metabolism. Its activity is regulated as follows. Requires potassium. Inhibition by ADP. Functionally, catalyzes the phosphorylation of the ketose sugar fructose to fructose-1-phosphate. The polypeptide is Ketohexokinase (Homo sapiens (Human)).